Reading from the N-terminus, the 519-residue chain is Probable cytochrome P450 513D1 (519 aa).

The chain crosses the membrane as a helical span at residues 1–21 (MGISSIIIILFIIVLLKKLIK). Residue Cys-464 coordinates heme.

This sequence belongs to the cytochrome P450 family. Heme serves as cofactor.

The protein localises to the membrane. This chain is Probable cytochrome P450 513D1 (cyp513D1), found in Dictyostelium discoideum (Social amoeba).